Consider the following 378-residue polypeptide: Microtubule-associated protein 6 homolog (378 aa).

The segment at 36–111 is disordered; the sequence is VTDGAQPPPP…YQPSEAPLER (76 aa). Positions 52–62 are enriched in polar residues; the sequence is IETQPSLSDPY. 2 mn regions span residues 79–99 and 112–135; these read SVMRQDYQAWKANPEPSCKPR and ETQYKKDFRSWPIPRQGDHPWIPK. Composition is skewed to basic and acidic residues over residues 203–220, 242–252, 265–274, and 306–315; these read KRESFMPKLPAKEPRATR, NEFRPWTDVKP, PEEKVVHETS, and PSKESSKVEK. The tract at residues 203–378 is disordered; it reads KRESFMPKLP…INNKLAEAKE (176 aa). Residues 237–260 are mn 3; the sequence is GTSYRNEFRPWTDVKPVKPIKAKS. A compositionally biased stretch (basic residues) spans 322–337; sequence KPKKTSTSHKPVKKAK. Residues 359–378 show a composition bias toward basic and acidic residues; it reads KPEEKEKSKEINNKLAEAKE.

The protein belongs to the STOP family.

The protein resides in the cytoplasm. It is found in the cytoskeleton. Involved in microtubule stabilization in many cell types, including neuronal cells. Specifically has microtubule cold stabilizing activity. Involved in dendrite morphogenesis and maintenance by regulating lysosomal trafficking. This Xenopus tropicalis (Western clawed frog) protein is Microtubule-associated protein 6 homolog (map6).